Consider the following 212-residue polypeptide: Protein-L-isoaspartate O-methyltransferase (212 aa).

Residue Ser-62 is part of the active site.

The protein belongs to the methyltransferase superfamily. L-isoaspartyl/D-aspartyl protein methyltransferase family.

It localises to the cytoplasm. The enzyme catalyses [protein]-L-isoaspartate + S-adenosyl-L-methionine = [protein]-L-isoaspartate alpha-methyl ester + S-adenosyl-L-homocysteine. In terms of biological role, catalyzes the methyl esterification of L-isoaspartyl residues in peptides and proteins that result from spontaneous decomposition of normal L-aspartyl and L-asparaginyl residues. It plays a role in the repair and/or degradation of damaged proteins. This is Protein-L-isoaspartate O-methyltransferase from Pseudoalteromonas translucida (strain TAC 125).